Reading from the N-terminus, the 142-residue chain is Thioredoxin-like protein YLS8 (142 aa).

Belongs to the DIM1 family. Expressed in roots, leaves, stems, cauline leaves and flowers.

The polypeptide is Thioredoxin-like protein YLS8 (YLS8) (Arabidopsis thaliana (Mouse-ear cress)).